The sequence spans 293 residues: Elongation factor Ts (293 aa).

The interval 80–83 (TDFV) is involved in Mg(2+) ion dislocation from EF-Tu.

Belongs to the EF-Ts family.

The protein resides in the cytoplasm. In terms of biological role, associates with the EF-Tu.GDP complex and induces the exchange of GDP to GTP. It remains bound to the aminoacyl-tRNA.EF-Tu.GTP complex up to the GTP hydrolysis stage on the ribosome. The polypeptide is Elongation factor Ts (Burkholderia pseudomallei (strain 1106a)).